We begin with the raw amino-acid sequence, 251 residues long: HTH-type transcriptional regulator UlaR (251 aa).

The region spanning 3-58 is the HTH deoR-type domain; it reads EAQRHQILLEMLAQLGFVTVEKVVERLGISPATARRDINKLDESGKLKKVRNGAEA. A DNA-binding region (H-T-H motif) is located at residues 20–39; the sequence is VTVEKVVERLGISPATARRD.

The protein localises to the cytoplasm. In terms of biological role, represses ulaG and the ulaABCDEF operon. The protein is HTH-type transcriptional regulator UlaR of Shigella dysenteriae serotype 1 (strain Sd197).